A 434-amino-acid polypeptide reads, in one-letter code: MFS-type transporter pynF (434 aa).

A compositionally biased stretch (basic and acidic residues) spans Met-1 to Ser-13. Positions Met-1 to Leu-34 are disordered. Transmembrane regions (helical) follow at residues Trp-44–Phe-64, Ile-84–Pro-104, Val-109–Thr-129, Leu-138–Ile-158, Ile-171–Ile-191, Thr-203–Ile-223, Leu-249–Leu-269, Val-280–Gly-302, Phe-311–Ile-331, Ser-334–Leu-354, Leu-375–Leu-395, and Trp-402–Leu-422.

The protein belongs to the major facilitator superfamily. Monocarboxylate porter (TC 2.A.1.13) family.

It is found in the cell membrane. MFS-type transporter; part of the gene cluster that mediates the biosynthesis of pyranonigrins, a family of antioxidative compounds. May be involved in the secretion of pyranonigrins. This is MFS-type transporter pynF from Aspergillus niger (strain ATCC MYA-4892 / CBS 513.88 / FGSC A1513).